Consider the following 449-residue polypeptide: MALPIVAVVGRPNVGKSTFVNRLAGERDAIVHDEPGVTRDRTYRPAFWQDREFLVVDTGGLVFDDDSDFLPLIRQQAELALQEATAAIFVVDGQAGPTALDYEIAAWLRQLSLPVLVAVNKCESRQMGQVQAAEFWSLGLGEPYPISSIHGSGTGELLDQLITYLPAGETLPEAPEIQVAIAGRPNVGKSSLLNALIGSDRAIVSPISGTTRDAIDTVIEHGGTQYRFIDTAGIRKRTHVAYGPEMFSVHRAFKAIHRSDVVLLVLDALEEITEQDQRLAGHIADQGRACVLIVNKWDAVLDKDTYTINAYRDRLYQRLHFLEWADALFVSAHTGQRLEKIFAAVDAAVEQHRRRVTTAVVNDVIQEALHWHTPPATRQGRQGKIYYATQVATQPPTFAIFVNDAKLFKENYRRYIESQIRQQLGFRGTPIRLLWRSKKPREAAELVAR.

EngA-type G domains are found at residues 4-169 (PIVA…PAGE) and 177-353 (IQVA…EQHR). GTP is bound by residues 10–17 (GRPNVGKS), 57–61 (DTGGL), 120–123 (NKCE), 183–190 (GRPNVGKS), 230–234 (DTAGI), and 295–298 (NKWD). Residues 354-439 (RRVTTAVVND…PIRLLWRSKK (86 aa)) enclose the KH-like domain.

Belongs to the TRAFAC class TrmE-Era-EngA-EngB-Septin-like GTPase superfamily. EngA (Der) GTPase family. In terms of assembly, associates with the 50S ribosomal subunit.

In terms of biological role, GTPase that plays an essential role in the late steps of ribosome biogenesis. This is GTPase Der from Thermosynechococcus vestitus (strain NIES-2133 / IAM M-273 / BP-1).